Reading from the N-terminus, the 569-residue chain is AA9 family lytic polysaccharide monooxygenase A (569 aa).

Positions 1–16 are cleaved as a signal peptide; it reads MRIFSLALGFLPLVAG. Cu(2+) is bound by residues H17 and H99. A disulfide bridge links C59 with C189. N-linked (GlcNAc...) asparagine glycosylation is present at N112. H174 and Q184 together coordinate O2. Y186 provides a ligand contact to Cu(2+). 2 N-linked (GlcNAc...) asparagine glycosylation sites follow: N244 and N381. Residues 399–424 are compositionally biased toward low complexity; that stretch reads AADATATATATTEDAEATTAAEAAAT. Residues 399 to 439 are disordered; it reads AADATATATATTEDAEATTAAEAAATSGAGRPGRGHGHGRG. N472 carries N-linked (GlcNAc...) asparagine glycosylation.

The protein belongs to the polysaccharide monooxygenase AA9 family. Cu(2+) serves as cofactor.

It is found in the secreted. It catalyses the reaction [(1-&gt;4)-beta-D-glucosyl]n+m + reduced acceptor + O2 = 4-dehydro-beta-D-glucosyl-[(1-&gt;4)-beta-D-glucosyl]n-1 + [(1-&gt;4)-beta-D-glucosyl]m + acceptor + H2O.. Its function is as follows. Lytic polysaccharide monooxygenase (LPMO) that depolymerizes crystalline and amorphous polysaccharides via the oxidation of scissile alpha- or beta-(1-4)-glycosidic bonds, yielding C4 oxidation products. Catalysis by LPMOs requires the reduction of the active-site copper from Cu(II) to Cu(I) by a reducing agent and H(2)O(2) or O(2) as a cosubstrate. This Emericella nidulans (strain FGSC A4 / ATCC 38163 / CBS 112.46 / NRRL 194 / M139) (Aspergillus nidulans) protein is AA9 family lytic polysaccharide monooxygenase A.